Here is a 444-residue protein sequence, read N- to C-terminus: Probable ribonuclease FAU-1 (444 aa).

Belongs to the FAU-1 family.

In terms of biological role, probable RNase involved in rRNA stability through maturation and/or degradation of precursor rRNAs. Binds to RNA in loop regions with AU-rich sequences. This chain is Probable ribonuclease FAU-1, found in Pyrobaculum arsenaticum (strain DSM 13514 / JCM 11321 / PZ6).